The following is a 586-amino-acid chain: Capsid scaffolding protein (586 aa).

Residues histidine 53, serine 123, and histidine 142 each act as charge relay system in the active site. Positions 251-263 are enriched in basic and acidic residues; sequence SEETPENAIKDRS. 4 disordered regions span residues 251–288, 330–364, 458–486, and 530–586; these read SEET…HVPA, ARRD…DIWP, NKRD…YFPG, and SASN…MMAD. Residues 264-284 are compositionally biased toward polar residues; sequence VSTQTAPSFDISESQQPSGQT. Positions 312 to 331 are interaction with pAP; sequence EDMVYVPFEKYASLLAASAR. 2 interaction with major capsid protein regions span residues 566 to 586 and 567 to 586; these read DAQT…MMAD and AQTK…MMAD.

It belongs to the herpesviridae capsid scaffolding protein family. As to quaternary structure, homomultimer. Interacts with major capsid protein. In terms of assembly, exists in a monomer-dimer equilibrium with the dimer being the active species. In terms of processing, capsid scaffolding protein is cleaved by assemblin after formation of the spherical procapsid. As a result, the capsid obtains its mature, icosahedral shape. Cleavages occur at two or more sites: release (R-site) and maturation (M-site).

Its subcellular location is the host cytoplasm. It is found in the host nucleus. The catalysed reaction is Cleaves -Ala-|-Ser- and -Ala-|-Ala- bonds in the scaffold protein.. Acts as a scaffold protein by binding major capsid protein in the cytoplasm, inducing the nuclear localization of both proteins. Multimerizes in the nucleus such as major capsid protein forms the icosahedral T=16 capsid. Autocatalytic cleavage releases the assembly protein, and subsequently abolishes interaction with major capsid protein. Cleavages products are evicted from the capsid before or during DNA packaging. In terms of biological role, protease that plays an essential role in virion assembly within the nucleus. Catalyzes the cleavage of the assembly protein after formation of the spherical procapsid. By that cleavage, the capsid matures and gains its icosahedral shape. The cleavage sites seem to include -Ala-Ser-, -Ala-Ala-, as well as Ala-Thr bonds. Assemblin and cleavages products are evicted from the capsid before or during DNA packaging. Functionally, plays a major role in capsid assembly. Acts as a scaffold protein by binding major capsid protein. Multimerizes in the nucleus such as major capsid protein forms the icosahedral T=16 capsid. Cleaved by assemblin after capsid completion. The cleavages products are evicted from the capsid before or during DNA packaging. This chain is Capsid scaffolding protein, found in Gallus gallus (Chicken).